The primary structure comprises 152 residues: Catabolic 3-dehydroquinase 1 (152 aa).

Y24 serves as the catalytic Proton acceptor. Substrate-binding residues include N75, H81, and D88. H101 acts as the Proton donor in catalysis. Substrate-binding positions include 102–103 (VS) and R112.

Belongs to the type-II 3-dehydroquinase family. In terms of assembly, homododecamer. Adopts a ring-like structure, composed of an arrangement of two hexameric rings stacked on top of one another.

It catalyses the reaction 3-dehydroquinate = 3-dehydroshikimate + H2O. It participates in aromatic compound metabolism; 3,4-dihydroxybenzoate biosynthesis; 3,4-dihydroxybenzoate from 3-dehydroquinate: step 1/2. Functionally, is involved in the catabolism of quinate. Allows the utilization of quinate as carbon source via the beta-ketoadipate pathway. This is Catabolic 3-dehydroquinase 1 from Aspergillus terreus (strain NIH 2624 / FGSC A1156).